We begin with the raw amino-acid sequence, 248 residues long: Small ribosomal subunit protein uS5 (248 aa).

The disordered stretch occupies residues 1–87 (MEDKKLSSAK…NPRFQRNNKD (87 aa)). A compositionally biased stretch (low complexity) spans 8–23 (SAKPATSSKPAPKAPS). The segment covering 57–87 (VAFEKRNFTSGDKTKKPTDSKNPRFQRNNKD) has biased composition (basic and acidic residues). Residues 94–157 (YEEKIVDIAR…KDAHNNLVEV (64 aa)) form the S5 DRBM domain.

This sequence belongs to the universal ribosomal protein uS5 family. Part of the 30S ribosomal subunit. Contacts proteins S4 and S8.

With S4 and S12 plays an important role in translational accuracy. In terms of biological role, located at the back of the 30S subunit body where it stabilizes the conformation of the head with respect to the body. This Mycoplasmopsis synoviae (strain 53) (Mycoplasma synoviae) protein is Small ribosomal subunit protein uS5.